Consider the following 123-residue polypeptide: Small ribosomal subunit protein uS12 (123 aa).

Positions 1–47 (MPTINQLVRKGRKKAEKKQSTPALKGGPQKRGVCTRVYTSTPKKPNS) are disordered. 3-methylthioaspartic acid is present on aspartate 89.

This sequence belongs to the universal ribosomal protein uS12 family. In terms of assembly, part of the 30S ribosomal subunit. Contacts proteins S8 and S17. May interact with IF1 in the 30S initiation complex.

Functionally, with S4 and S5 plays an important role in translational accuracy. Interacts with and stabilizes bases of the 16S rRNA that are involved in tRNA selection in the A site and with the mRNA backbone. Located at the interface of the 30S and 50S subunits, it traverses the body of the 30S subunit contacting proteins on the other side and probably holding the rRNA structure together. The combined cluster of proteins S8, S12 and S17 appears to hold together the shoulder and platform of the 30S subunit. The sequence is that of Small ribosomal subunit protein uS12 from Desulforapulum autotrophicum (strain ATCC 43914 / DSM 3382 / VKM B-1955 / HRM2) (Desulfobacterium autotrophicum).